A 178-amino-acid chain; its full sequence is Mediator of RNA polymerase II transcription subunit 28 (178 aa).

Positions 1–44 (MAAPLGGMFSGQPPGPPQAPPGLPGQASLLQAAPGAPRPSSSTL) are disordered. Over residues 13–23 (PPGPPQAPPGL) the composition is skewed to pro residues. The stretch at 109 to 145 (QVIKEDVSELRNELQRKDALVQKHLTKLRHWQQVLED) forms a coiled coil.

It belongs to the Mediator complex subunit 28 family. As to quaternary structure, component of the Mediator complex, which is composed of MED1, MED4, MED6, MED7, MED8, MED9, MED10, MED11, MED12, MED13, MED13L, MED14, MED15, MED16, MED17, MED18, MED19, MED20, MED21, MED22, MED23, MED24, MED25, MED26, MED27, MED29, MED30, MED31, CCNC, CDK8 and CDC2L6/CDK11. The MED12, MED13, CCNC and CDK8 subunits form a distinct module termed the CDK8 module. Mediator containing the CDK8 module is less active than Mediator lacking this module in supporting transcriptional activation. Individual preparations of the Mediator complex lacking one or more distinct subunits have been variously termed ARC, CRSP, DRIP, PC2, SMCC and TRAP. Forms a ternary complex with NF2/merlin and GRB2. Binds to actin. As to expression, widely expressed. Highly expressed in vascular tissues such as placenta, testis and liver.

The protein resides in the nucleus. Its subcellular location is the cytoplasm. It localises to the membrane. In terms of biological role, component of the Mediator complex, a coactivator involved in the regulated transcription of nearly all RNA polymerase II-dependent genes. Mediator functions as a bridge to convey information from gene-specific regulatory proteins to the basal RNA polymerase II transcription machinery. Mediator is recruited to promoters by direct interactions with regulatory proteins and serves as a scaffold for the assembly of a functional preinitiation complex with RNA polymerase II and the general transcription factors. May be part of a complex containing NF2/merlin that participates in cellular signaling to the actin cytoskeleton downstream of tyrosine kinase signaling pathways. This chain is Mediator of RNA polymerase II transcription subunit 28 (MED28), found in Homo sapiens (Human).